The primary structure comprises 233 residues: Large ribosomal subunit protein uL1 (233 aa).

This sequence belongs to the universal ribosomal protein uL1 family. Part of the 50S ribosomal subunit.

Binds directly to 23S rRNA. The L1 stalk is quite mobile in the ribosome, and is involved in E site tRNA release. Its function is as follows. Protein L1 is also a translational repressor protein, it controls the translation of the L11 operon by binding to its mRNA. In Laribacter hongkongensis (strain HLHK9), this protein is Large ribosomal subunit protein uL1.